The primary structure comprises 210 residues: Urease accessory protein UreG (210 aa).

15-22 (GPVGSGKT) is a binding site for GTP.

The protein belongs to the SIMIBI class G3E GTPase family. UreG subfamily. As to quaternary structure, homodimer. UreD, UreF and UreG form a complex that acts as a GTP-hydrolysis-dependent molecular chaperone, activating the urease apoprotein by helping to assemble the nickel containing metallocenter of UreC. The UreE protein probably delivers the nickel.

The protein localises to the cytoplasm. Its function is as follows. Facilitates the functional incorporation of the urease nickel metallocenter. This process requires GTP hydrolysis, probably effectuated by UreG. In Ralstonia nicotianae (strain ATCC BAA-1114 / GMI1000) (Ralstonia solanacearum), this protein is Urease accessory protein UreG.